A 484-amino-acid chain; its full sequence is AMP nucleosidase (484 aa).

The protein belongs to the AMP nucleosidase family.

The enzyme catalyses AMP + H2O = adenine + D-ribose 5-phosphate. In terms of biological role, catalyzes the hydrolysis of the N-glycosidic bond of AMP to form adenine and ribose 5-phosphate. Involved in regulation of AMP concentrations. The protein is AMP nucleosidase of Escherichia coli O157:H7.